The primary structure comprises 310 residues: 4-hydroxyproline epimerase (310 aa).

The Proton acceptor role is filled by Cys-88. Substrate contacts are provided by residues 89 to 90, His-208, and Asp-232; that span reads GH. Residue Cys-236 is the Proton donor of the active site. 237–238 lines the substrate pocket; that stretch reads GT.

Belongs to the proline racemase family. Homodimer.

The catalysed reaction is trans-4-hydroxy-L-proline = cis-4-hydroxy-D-proline. With respect to regulation, inhibited by iodoacetate, iodoacetamide and by high amounts (10 mM) of pyrrole-2-carboxylic acid (PYC). Not inhibited by PYC at 1 mM. Allows intracellular utilization of 4-hydroxyproline, one of the major constituents of host collagen, by converting 4-hydroxy-L-proline to 4-hydroxy-D-proline, which can be further metabolized by intracellular 4-hydroxy-D-proline oxidases. The sequence is that of 4-hydroxyproline epimerase from Burkholderia pseudomallei (strain K96243).